The following is a 510-amino-acid chain: NAD(P)H-quinone oxidoreductase subunit 2 A, chloroplastic (510 aa).

13 helical membrane passes run 24 to 44 (LLLF…GLIL), 57 to 77 (TPWL…ALLF), 99 to 119 (IFQF…VEYI), 124 to 144 (MAIT…MFLC), 149 to 169 (LITI…LSGY), 183 to 203 (YLLM…WLYG), 229 to 249 (ISIA…PAPF), 295 to 315 (WHLL…LIAI), 323 to 343 (MLAY…IVGD), 354 to 374 (YMLF…LFGL), 395 to 415 (ALSS…AGFF), 418 to 438 (LYLF…IGLL), and 484 to 504 (MIVC…IIAI).

It belongs to the complex I subunit 2 family. In terms of assembly, NDH is composed of at least 16 different subunits, 5 of which are encoded in the nucleus.

The protein resides in the plastid. It is found in the chloroplast thylakoid membrane. The enzyme catalyses a plastoquinone + NADH + (n+1) H(+)(in) = a plastoquinol + NAD(+) + n H(+)(out). It carries out the reaction a plastoquinone + NADPH + (n+1) H(+)(in) = a plastoquinol + NADP(+) + n H(+)(out). In terms of biological role, NDH shuttles electrons from NAD(P)H:plastoquinone, via FMN and iron-sulfur (Fe-S) centers, to quinones in the photosynthetic chain and possibly in a chloroplast respiratory chain. The immediate electron acceptor for the enzyme in this species is believed to be plastoquinone. Couples the redox reaction to proton translocation, and thus conserves the redox energy in a proton gradient. The chain is NAD(P)H-quinone oxidoreductase subunit 2 A, chloroplastic from Nuphar advena (Common spatterdock).